Here is an 82-residue protein sequence, read N- to C-terminus: UPF0512 protein P (82 aa).

Belongs to the UPF0512 family.

The polypeptide is UPF0512 protein P (Dictyostelium discoideum (Social amoeba)).